Here is a 2332-residue protein sequence, read N- to C-terminus: Genome polyprotein (2332 aa).

One can recognise a Peptidase C28 domain in the interval 1-201; it reads MNTTDCFIAL…WKAKVQRKLK (201 aa). The Cytoplasmic segment spans residues 1-1480; sequence MNTTDCFIAL…SFVKRAFKRL (1480 aa). Active-site for leader protease activity residues include C51, H148, and D163. 2 disordered regions span residues 197–218 and 238–265; these read QRKLKGAGQSSPATGSQNQSGN and QLGDNAISGGSNEGSTDTTSTHTTNTQN. Residue G202 is the site of N-myristoyl glycine; by host attachment. Composition is skewed to polar residues over residues 204–218 and 238–251; these read GQSSPATGSQNQSGN and QLGDNAISGGSNEG. The segment covering 252–265 has biased composition (low complexity); it reads STDTTSTHTTNTQN. An intrachain disulfide couples C406 to C858. The tract at residues 788-796 is antigenic epitope; the sequence is ALLRASTYY. The Cell attachment site motif lies at 869 to 871; it reads RGD. The 165-residue stretch at 1189–1353 folds into the SF3 helicase domain; it reads NVHIANLCKV…DGYKINSKLD (165 aa). 1217–1224 is a binding site for ATP; the sequence is GKSGQGKS. An intramembrane segment occupies 1481–1501; sequence KENFEIVALCLTLLANIVIMI. Residues 1502 to 2332 lie on the Cytoplasmic side of the membrane; that stretch reads RETRKRQKMV…RWVNAVCGDA (831 aa). Residues 1529-1538 show a composition bias toward basic and acidic residues; it reads KTLDEAEKSP. The tract at residues 1529-1584 is disordered; sequence KTLDEAEKSPLETSGASTVGFRERTLPGQKACDDVNSEPAQPVEEQPQAEGPYAGP. An O-(5'-phospho-RNA)-tyrosine mark is found at Y1581, Y1604, and Y1628. The 197-residue stretch at 1652 to 1848 folds into the Peptidase C3 domain; it reads APPTDLQKMV…YCSCVSRSML (197 aa). The active-site For protease 3C activity; Proton donor/acceptor is the H1695. Residues D1733 and C1812 each act as for protease 3C activity in the active site. 2 short sequence motifs (nuclear localization signal) span residues 1878-1886 and 1879-1886; these read MRKTKLAPT and RKTKLAPT. One can recognise a RdRp catalytic domain in the interval 2096–2214; sequence RNVWDVDYSA…ASDYDLDFEA (119 aa). Catalysis depends on D2200, which acts as the For RdRp activity.

The protein belongs to the picornaviruses polyprotein family. In terms of assembly, interacts with host ISG15. As to quaternary structure, interacts (via R-G-D motif) with host ITGAV/ITGB6. Interacts with host MAVS; this interaction inhibits binding of host TRAF3 to MAVS, thereby suppressing interferon-mediated responses. Forms homooligomers. In terms of assembly, homohexamer. Interacts with host VIM. Interacts with host BECN1. As to quaternary structure, interacts with host DCTN3. Interacts with RNA-dependent RNA polymerase; this interaction allows 3B-1 to binds 2 polymerases and act as a primer. It also allows the recruitment of the RNA-dependent RNA polymerase to host membranes. In terms of assembly, interacts with RNA-dependent RNA polymerase; this interaction allows 3B-2 to act as a primer. As to quaternary structure, interacts with RNA-dependent RNA polymerase; this interaction allows 3B-3 to act as a primer. Interacts with 3B-1; this interaction allows 3B-1 to binds 2 polymerases and act as a primer. It also allows the recruitment of the RNA-dependent RNA polymerase to host membranes. Interacts with 3B-2; this interaction allows 3B-2 to act as a primer. Interacts with 3B-3; this interaction allows 3B-3 to act as a primer. In terms of processing, removes six residues from its own C-terminus, generating sLb(pro). Specific enzymatic cleavages in vivo by the viral proteases yield a variety of precursors and mature proteins. The polyprotein seems to be cotranslationally cleaved at the 2A/2B junction by a ribosomal skip from one codon to the next without formation of a peptide bond. This process would release the L-P1-2A peptide from the translational complex. Post-translationally, during virion maturation, immature virions are rendered infectious following cleavage of VP0 into VP4 and VP2. This maturation seems to be an autocatalytic event triggered by the presence of RNA in the capsid and is followed by a conformational change of the particle. In terms of processing, myristoylation is required during RNA encapsidation and formation of the mature virus particle. Uridylylated by the polymerase and covalently linked to the 5'-end of genomic RNA. These uridylylated forms act as a nucleotide-peptide primer for the polymerase. Post-translationally, the disulfide bond between VP1 and VP2 occurs after release of virus from the host cell.

It is found in the host nucleus. It localises to the host cytoplasm. Its subcellular location is the virion. The protein resides in the host endoplasmic reticulum membrane. The protein localises to the host cytoplasmic vesicle membrane. The enzyme catalyses Autocatalytically cleaves itself from the polyprotein of the foot-and-mouth disease virus by hydrolysis of a Lys-|-Gly bond, but then cleaves host cell initiation factor eIF-4G at bonds -Gly-|-Arg- and -Lys-|-Arg-.. The catalysed reaction is a ribonucleoside 5'-triphosphate + H2O = a ribonucleoside 5'-diphosphate + phosphate + H(+). It catalyses the reaction RNA(n) + a ribonucleoside 5'-triphosphate = RNA(n+1) + diphosphate. It carries out the reaction Selective cleavage of Gln-|-Gly bond in the poliovirus polyprotein. In other picornavirus reactions Glu may be substituted for Gln, and Ser or Thr for Gly.. Autocatalytically cleaves itself from the polyprotein at the L/VP0 junction. Also cleaves the host translation initiation factors EIF4G1 and EIF4G3, in order to shut off the capped cellular mRNA transcription. Plays a role in counteracting host innate antiviral response using diverse mechanisms. Possesses a deubiquitinase activity acting on both 'Lys-48' and 'Lys-63'-linked polyubiquitin chains. In turn, inhibits the ubiquitination and subsequent activation of key signaling molecules of type I IFN response such as host RIGI, TBK1, TRAF3 and TRAF6. Inhibits host NF-kappa-B activity by inducing a decrease in RELA mRNA levels. Cleaves a peptide bond in the C-terminus of host ISG15, resulting in the damaging of this modifier that can no longer be attached to target proteins. Also cleaves host G3BP1 and G3BP2 in order to inhibit cytoplasmic stress granules assembly. Functionally, lies on the inner surface of the capsid shell. After binding to the host receptor, the capsid undergoes conformational changes. Capsid protein VP4 is released, capsid protein VP1 N-terminus is externalized, and together, they shape a pore in the host membrane through which the viral genome is translocated into the host cell cytoplasm. After genome has been released, the channel shrinks. Its function is as follows. Forms an icosahedral capsid of pseudo T=3 symmetry with capsid proteins VP1 and VP3. The capsid is composed of 60 copies of each capsid protein organized in the form of twelve pentamers and encloses the viral positive strand RNA genome. Upon acidifcation in the endosome, dissociates into pentamers. In terms of biological role, forms an icosahedral capsid of pseudo T=3 symmetry with capsid proteins VP2 and VP3. The capsid is composed of 60 copies of each capsid protein organized in the form of twelve pentamers and encloses the viral positive strand RNA genome. Mediates cell entry by attachment to an integrin receptor, usually host ITGAV/ITGB6, via a conserved arginine-glycine-aspartic acid (R-G-D) motif. In addition, targets host MAVS to suppress type I IFN pathway. Upon acidifcation in the endosome, dissociates into pentamers. Forms an icosahedral capsid of pseudo T=3 symmetry with capsid proteins VP0 and VP3. The capsid is composed of 60 copies of each capsid protein organized in the form of twelve pentamers and encloses the viral positive strand RNA genome. Upon acidifcation in the endosome, dissociates into pentamers. Functionally, mediates self-processing of the polyprotein by a translational effect termed 'ribosome skipping'. Mechanistically, 2A-mediated cleavage occurs between the C-terminal glycine and the proline of the downstream protein 2B. In the case of foot-and-mouth disease virus, the 2A oligopeptide is post-translationally 'trimmed' from the C-terminus of the upstream protein 1D by 3C proteinase. Its function is as follows. Plays an essential role in the virus replication cycle by acting as a viroporin. Creates a pore in the host endoplasmic reticulum and as a consequence releases Ca2+ in the cytoplasm of infected cell. In turn, high levels of cytoplasmic calcium may trigger membrane trafficking and transport of viral ER-associated proteins to viroplasms, sites of viral genome replication. In terms of biological role, associates with and induces structural rearrangements of intracellular membranes. Triggers host autophagy by interacting with host BECN1 and thereby promotes viral replication. Participates in viral replication and interacts with host DHX9. Displays RNA-binding, nucleotide binding and NTPase activities. May play a role in virion morphogenesis and viral RNA encapsidation by interacting with the capsid protein VP3. Plays important roles in virus replication, virulence and host range. Cooperates with host DDX56 to inhibit IRF3 nuclear translocation and subsequent type I interferon production. Functionally, covalently linked to the 5'-end of both the positive-strand and negative-strand genomic RNAs. Acts as a genome-linked replication primer. Its function is as follows. Cysteine protease that generates mature viral proteins from the precursor polyprotein. In addition to its proteolytic activity, binds to viral RNA and thus influences viral genome replication. RNA and substrate bind cooperatively to the protease. In terms of biological role, RNA-directed RNA polymerase 3D-POL replicates genomic and antigenomic RNA by recognizing replications specific signals. Covalently attaches UMP to a tyrosine of VPg, which is used to prime RNA synthesis. The positive stranded RNA genome is first replicated at virus induced membranous vesicles, creating a dsRNA genomic replication form. This dsRNA is then used as template to synthesize positive stranded RNA genomes. ss(+)RNA genomes are either translated, replicated or encapsidated. This Bos taurus (Bovine) protein is Genome polyprotein.